Consider the following 233-residue polypeptide: Phycoerythrobilin synthase (233 aa).

Belongs to the HY2 family.

It carries out the reaction (3Z)-phycoerythrobilin + 2 oxidized 2[4Fe-4S]-[ferredoxin] = biliverdin IXalpha + 2 reduced 2[4Fe-4S]-[ferredoxin] + 4 H(+). Its function is as follows. Plays a role in phycoerythrobilin biosynthesis, the red pigment chromophore photosynthetically active biliproteins of the host cyanobacteria. Uses a four-electron reduction to carry out the reactions catalyzed by two enzymes (EC 1.3.7.2 and EC 1.3.7.3) in host. The sequence is that of Phycoerythrobilin synthase (pebS) from Prochlorococcus.